The following is a 384-amino-acid chain: 4-hydroxy-3-methylbut-2-en-1-yl diphosphate synthase (flavodoxin) (384 aa).

Residues C272, C275, C307, and E314 each coordinate [4Fe-4S] cluster.

It belongs to the IspG family. [4Fe-4S] cluster serves as cofactor.

The catalysed reaction is (2E)-4-hydroxy-3-methylbut-2-enyl diphosphate + oxidized [flavodoxin] + H2O + 2 H(+) = 2-C-methyl-D-erythritol 2,4-cyclic diphosphate + reduced [flavodoxin]. It functions in the pathway isoprenoid biosynthesis; isopentenyl diphosphate biosynthesis via DXP pathway; isopentenyl diphosphate from 1-deoxy-D-xylulose 5-phosphate: step 5/6. Functionally, converts 2C-methyl-D-erythritol 2,4-cyclodiphosphate (ME-2,4cPP) into 1-hydroxy-2-methyl-2-(E)-butenyl 4-diphosphate. This is 4-hydroxy-3-methylbut-2-en-1-yl diphosphate synthase (flavodoxin) from Rhodospirillum rubrum (strain ATCC 11170 / ATH 1.1.1 / DSM 467 / LMG 4362 / NCIMB 8255 / S1).